The primary structure comprises 506 residues: uncharacterized protein (506 aa).

This sequence belongs to the Mg-chelatase subunits D/I family. ComM subfamily.

This is an uncharacterized protein from Escherichia coli (strain K12).